Consider the following 1465-residue polypeptide: DNA polymerase III polC-type (1465 aa).

Residues 427–583 (YVVFDVETTG…YDAEATGRLL (157 aa)) form the Exonuclease domain.

The protein belongs to the DNA polymerase type-C family. PolC subfamily.

The protein localises to the cytoplasm. The enzyme catalyses DNA(n) + a 2'-deoxyribonucleoside 5'-triphosphate = DNA(n+1) + diphosphate. Required for replicative DNA synthesis. This DNA polymerase also exhibits 3' to 5' exonuclease activity. The protein is DNA polymerase III polC-type of Streptococcus pyogenes serotype M3 (strain ATCC BAA-595 / MGAS315).